The sequence spans 101 residues: NAD(P)H-quinone oxidoreductase subunit 4L, chloroplastic (101 aa).

Transmembrane regions (helical) follow at residues 2–22 (ILEHVLVLSAYLFFIGLYGLI), 32–52 (MCLELILNAVNMNFVTFSDFF), and 61–81 (IFCIFVIAIAAAEAAIGLAIV).

It belongs to the complex I subunit 4L family. In terms of assembly, NDH is composed of at least 16 different subunits, 5 of which are encoded in the nucleus.

It localises to the plastid. The protein localises to the chloroplast thylakoid membrane. The enzyme catalyses a plastoquinone + NADH + (n+1) H(+)(in) = a plastoquinol + NAD(+) + n H(+)(out). It carries out the reaction a plastoquinone + NADPH + (n+1) H(+)(in) = a plastoquinol + NADP(+) + n H(+)(out). In terms of biological role, NDH shuttles electrons from NAD(P)H:plastoquinone, via FMN and iron-sulfur (Fe-S) centers, to quinones in the photosynthetic chain and possibly in a chloroplast respiratory chain. The immediate electron acceptor for the enzyme in this species is believed to be plastoquinone. Couples the redox reaction to proton translocation, and thus conserves the redox energy in a proton gradient. The chain is NAD(P)H-quinone oxidoreductase subunit 4L, chloroplastic from Aethionema cordifolium (Lebanon stonecress).